Consider the following 65-residue polypeptide: Putative potassium channel toxin Ts21 (65 aa).

The signal sequence occupies residues 1–25 (MNKVYLVAILVLSVLLVANVSPIEG). Cystine bridges form between Cys31–Cys53, Cys38–Cys61, and Cys42–Cys63.

It belongs to the short scorpion toxin superfamily. Potassium channel inhibitor family. Alpha-KTx 11 subfamily. As to expression, expressed by the venom gland.

The protein resides in the secreted. Its function is as follows. This recombinant toxin inhibits the mammalian voltage-gated potassium channels Kv1.3/KCNA3 in vitro with an IC(50) of 26.40 nM. This chain is Putative potassium channel toxin Ts21, found in Tityus serrulatus (Brazilian scorpion).